The sequence spans 476 residues: Aspartyl/glutamyl-tRNA(Asn/Gln) amidotransferase subunit B (476 aa).

This sequence belongs to the GatB/GatE family. GatB subfamily. Heterotrimer of A, B and C subunits.

It catalyses the reaction L-glutamyl-tRNA(Gln) + L-glutamine + ATP + H2O = L-glutaminyl-tRNA(Gln) + L-glutamate + ADP + phosphate + H(+). It carries out the reaction L-aspartyl-tRNA(Asn) + L-glutamine + ATP + H2O = L-asparaginyl-tRNA(Asn) + L-glutamate + ADP + phosphate + 2 H(+). Its function is as follows. Allows the formation of correctly charged Asn-tRNA(Asn) or Gln-tRNA(Gln) through the transamidation of misacylated Asp-tRNA(Asn) or Glu-tRNA(Gln) in organisms which lack either or both of asparaginyl-tRNA or glutaminyl-tRNA synthetases. The reaction takes place in the presence of glutamine and ATP through an activated phospho-Asp-tRNA(Asn) or phospho-Glu-tRNA(Gln). This is Aspartyl/glutamyl-tRNA(Asn/Gln) amidotransferase subunit B from Geobacillus kaustophilus (strain HTA426).